A 799-amino-acid chain; its full sequence is Protein translocase subunit SecA (799 aa).

ATP contacts are provided by residues Gln-85, 103–107 (GEGKT), and Asp-504.

It belongs to the SecA family. As to quaternary structure, monomer and homodimer. Part of the essential Sec protein translocation apparatus which comprises SecA, SecYEG and auxiliary proteins SecDF. Other proteins may also be involved.

Its subcellular location is the cell membrane. The protein resides in the cytoplasm. The enzyme catalyses ATP + H2O + cellular proteinSide 1 = ADP + phosphate + cellular proteinSide 2.. Part of the Sec protein translocase complex. Interacts with the SecYEG preprotein conducting channel. Has a central role in coupling the hydrolysis of ATP to the transfer of proteins into and across the cell membrane, serving as an ATP-driven molecular motor driving the stepwise translocation of polypeptide chains across the membrane. The sequence is that of Protein translocase subunit SecA from Lactobacillus gasseri (strain ATCC 33323 / DSM 20243 / BCRC 14619 / CIP 102991 / JCM 1131 / KCTC 3163 / NCIMB 11718 / NCTC 13722 / AM63).